A 300-amino-acid polypeptide reads, in one-letter code: Pantoate kinase (300 aa).

Belongs to the GHMP kinase family. PoK subfamily. As to quaternary structure, homodimer.

It catalyses the reaction (R)-pantoate + ATP = (R)-4-phosphopantoate + ADP + H(+). The protein operates within cofactor biosynthesis; coenzyme A biosynthesis. With respect to regulation, moderately stimulated in the presence of potassium cations. Inhibited by increasing concentrations of pantoate. Activity is not affected by CoA/acetyl-CoA. Functionally, phosphorylates (R)-pantoate to form (R)-4-phosphopantoate in the CoA biosynthesis pathway. Displays broad nucleotide specificity and utilizes ATP, GTP, UTP, and CTP with comparable catalytic efficiencies. The protein is Pantoate kinase of Thermococcus kodakarensis (strain ATCC BAA-918 / JCM 12380 / KOD1) (Pyrococcus kodakaraensis (strain KOD1)).